Here is a 349-residue protein sequence, read N- to C-terminus: Isopentenyl-diphosphate delta-isomerase (349 aa).

Residue R9–K10 participates in substrate binding. FMN-binding positions include A65–T67, S95, and N124. S95–H97 contacts substrate. Q154 provides a ligand contact to substrate. E155 provides a ligand contact to Mg(2+). Residues K186, S211, T216, G262–R264, and S283–R284 contribute to the FMN site.

It belongs to the IPP isomerase type 2 family. Homooctamer. Dimer of tetramers. FMN is required as a cofactor. The cofactor is NADPH. It depends on Mg(2+) as a cofactor.

Its subcellular location is the cytoplasm. It catalyses the reaction isopentenyl diphosphate = dimethylallyl diphosphate. Involved in the biosynthesis of isoprenoids. Catalyzes the 1,3-allylic rearrangement of the homoallylic substrate isopentenyl (IPP) to its allylic isomer, dimethylallyl diphosphate (DMAPP). This is Isopentenyl-diphosphate delta-isomerase from Staphylococcus aureus (strain USA300 / TCH1516).